A 340-amino-acid polypeptide reads, in one-letter code: tRNA N6-adenosine threonylcarbamoyltransferase (340 aa).

Residues His115 and His119 each coordinate Fe cation. Residues 138–142 (VVSGG), Asp171, Gly184, Asp188, and Asn278 each bind substrate. Asp306 contacts Fe cation.

This sequence belongs to the KAE1 / TsaD family. The cofactor is Fe(2+).

The protein localises to the cytoplasm. The enzyme catalyses L-threonylcarbamoyladenylate + adenosine(37) in tRNA = N(6)-L-threonylcarbamoyladenosine(37) in tRNA + AMP + H(+). Required for the formation of a threonylcarbamoyl group on adenosine at position 37 (t(6)A37) in tRNAs that read codons beginning with adenine. Is involved in the transfer of the threonylcarbamoyl moiety of threonylcarbamoyl-AMP (TC-AMP) to the N6 group of A37, together with TsaE and TsaB. TsaD likely plays a direct catalytic role in this reaction. The polypeptide is tRNA N6-adenosine threonylcarbamoyltransferase (Clostridium botulinum (strain Hall / ATCC 3502 / NCTC 13319 / Type A)).